Here is a 633-residue protein sequence, read N- to C-terminus: DNA-directed RNA polymerase subunit gamma (633 aa).

Positions 74, 76, 89, and 92 each coordinate Zn(2+). Asp-471, Asp-473, and Asp-475 together coordinate Mg(2+).

It belongs to the RNA polymerase beta' chain family. RpoC1 subfamily. In cyanobacteria the RNAP catalytic core is composed of 2 alpha, 1 beta, 1 beta', 1 gamma and 1 omega subunit. When a sigma factor is associated with the core the holoenzyme is formed, which can initiate transcription. Requires Mg(2+) as cofactor. Zn(2+) serves as cofactor.

The catalysed reaction is RNA(n) + a ribonucleoside 5'-triphosphate = RNA(n+1) + diphosphate. Functionally, DNA-dependent RNA polymerase catalyzes the transcription of DNA into RNA using the four ribonucleoside triphosphates as substrates. In Prochlorococcus marinus (strain MIT 9211), this protein is DNA-directed RNA polymerase subunit gamma.